We begin with the raw amino-acid sequence, 76 residues long: Protein CASC2, isoforms 1/2 (76 aa).

Residues 1-20 (MAGTRGLMLLGPGPVAGPRD) are disordered.

This chain is Protein CASC2, isoforms 1/2 (CASC2), found in Homo sapiens (Human).